A 229-amino-acid polypeptide reads, in one-letter code: Cytidylate kinase (229 aa).

An ATP-binding site is contributed by 10–18 (GPAGSGKST).

It belongs to the cytidylate kinase family. Type 1 subfamily.

The protein resides in the cytoplasm. The enzyme catalyses CMP + ATP = CDP + ADP. It catalyses the reaction dCMP + ATP = dCDP + ADP. The sequence is that of Cytidylate kinase from Leptospira interrogans serogroup Icterohaemorrhagiae serovar Lai (strain 56601).